The chain runs to 418 residues: uncharacterized protein (418 aa).

This is an uncharacterized protein from Escherichia coli O157:H7.